A 169-amino-acid chain; its full sequence is Nucleoside-triphosphatase THEP1 (169 aa).

ATP is bound by residues 11-18 (GEPGVGKT) and 100-107 (IIGIDEIG).

It belongs to the THEP1 NTPase family.

The catalysed reaction is a ribonucleoside 5'-triphosphate + H2O = a ribonucleoside 5'-diphosphate + phosphate + H(+). Its function is as follows. Has nucleotide phosphatase activity towards ATP, GTP, CTP, TTP and UTP. May hydrolyze nucleoside diphosphates with lower efficiency. The protein is Nucleoside-triphosphatase THEP1 of Sulfurisphaera tokodaii (strain DSM 16993 / JCM 10545 / NBRC 100140 / 7) (Sulfolobus tokodaii).